Reading from the N-terminus, the 456-residue chain is UDP-N-acetylmuramate--L-alanine ligase (456 aa).

114-120 is an ATP binding site; sequence GTHGKTT.

It belongs to the MurCDEF family.

It localises to the cytoplasm. It catalyses the reaction UDP-N-acetyl-alpha-D-muramate + L-alanine + ATP = UDP-N-acetyl-alpha-D-muramoyl-L-alanine + ADP + phosphate + H(+). Its pathway is cell wall biogenesis; peptidoglycan biosynthesis. Its function is as follows. Cell wall formation. In Porphyromonas gingivalis (strain ATCC BAA-308 / W83), this protein is UDP-N-acetylmuramate--L-alanine ligase (murC).